Here is a 234-residue protein sequence, read N- to C-terminus: Ribosomal RNA small subunit methyltransferase G (234 aa).

S-adenosyl-L-methionine is bound by residues G74, F79, 125-126 (AE), and R144.

This sequence belongs to the methyltransferase superfamily. RNA methyltransferase RsmG family.

Its subcellular location is the cytoplasm. In terms of biological role, specifically methylates the N7 position of a guanine in 16S rRNA. This Roseiflexus sp. (strain RS-1) protein is Ribosomal RNA small subunit methyltransferase G.